Reading from the N-terminus, the 413-residue chain is Lysosomal phospholipase A and acyltransferase (413 aa).

The N-terminal stretch at 1–33 is a signal peptide; that stretch reads MDRHLCICREIQLRSGLLFPFLLLMMLADLALP. Asp46 lines the substrate pocket. Cys65 and Cys89 are oxidised to a cystine. Asn99 is a glycosylation site (N-linked (GlcNAc...) asparagine). Residue Ser198 is the Acyl-ester intermediate of the active site. Ser198 contributes to the Zn(2+) binding site. Residue Met199 participates in substrate binding. 2 N-linked (GlcNAc...) asparagine glycosylation sites follow: Asn273 and Asn289. Residue Cys355 coordinates Zn(2+). Residues Asp360 and His392 each act as charge relay system in the active site. His392 serves as a coordination point for Zn(2+). Asn398 is a glycosylation site (N-linked (GlcNAc...) asparagine).

The protein belongs to the AB hydrolase superfamily. Lipase family. Post-translationally, N-glycosylated. N-glycosylation is important for maturation of the enzyme and normal subcellular location. In terms of tissue distribution, detected in alveolar macrophages (at protein level). Widely expressed. Expressed at highest levels in alveolar macrophages.

It localises to the lysosome. The protein localises to the secreted. The protein resides in the membrane. The catalysed reaction is a 1,2-diacyl-sn-glycero-3-phosphocholine + H2O = a 2-acyl-sn-glycero-3-phosphocholine + a fatty acid + H(+). The enzyme catalyses 1,2-dihexadecanoyl-sn-glycero-3-phosphocholine + H2O = 2-hexadecanoyl-sn-glycero-3-phosphocholine + hexadecanoate + H(+). It carries out the reaction 1-hexadecanoyl-2-(9Z-octadecenoyl)-sn-glycero-3-phosphocholine + H2O = 2-(9Z-octadecenoyl)-sn-glycero-3-phosphocholine + hexadecanoate + H(+). It catalyses the reaction 1,2-di-(9Z-octadecenoyl)-sn-glycero-3-phosphocholine + H2O = 2-(9Z-octadecenoyl)-sn-glycero-3-phosphocholine + (9Z)-octadecenoate + H(+). The catalysed reaction is 1-hexadecanoyl-2-glutaroyl-sn-glycero-3-phosphocholine + H2O = 2-glutaroyl-sn-glycero-3-phosphocholine + hexadecanoate + H(+). The enzyme catalyses 1-hexadecanoyl-2-nonadioyl-sn-glycero-3-phosphocholine + H2O = 2-nonadioyl-sn-glycero-3-phosphocholine + hexadecanoate + H(+). It carries out the reaction 1-hexadecanoyl-2-(5-oxopentanoyl)-sn-glycero-3-phosphocholine + H2O = 2-(5-oxopentanoyl)-sn-glycero-3-phosphocholine + hexadecanoate + H(+). It catalyses the reaction 1-hexadecanoyl-2-(9-oxononanoyl)-sn-glycero-3-phosphocholine + H2O = 2-(9-oxononanoyl)-sn-glycero-3-phosphocholine + hexadecanoate + H(+). The catalysed reaction is a 1,2-diacyl-sn-glycero-3-phosphocholine + H2O = a 1-acyl-sn-glycero-3-phosphocholine + a fatty acid + H(+). The enzyme catalyses 1,2-dihexadecanoyl-sn-glycero-3-phosphocholine + H2O = 1-hexadecanoyl-sn-glycero-3-phosphocholine + hexadecanoate + H(+). It carries out the reaction 1-hexadecanoyl-2-(9Z-octadecenoyl)-sn-glycero-3-phosphocholine + H2O = 1-hexadecanoyl-sn-glycero-3-phosphocholine + (9Z)-octadecenoate + H(+). It catalyses the reaction 1,2-di-(9Z-octadecenoyl)-sn-glycero-3-phosphocholine + H2O = 1-(9Z-octadecenoyl)-sn-glycero-3-phosphocholine + (9Z)-octadecenoate + H(+). The catalysed reaction is a 1-acyl-sn-glycero-3-phosphocholine + H2O = sn-glycerol 3-phosphocholine + a fatty acid + H(+). The enzyme catalyses 1-hexadecanoyl-sn-glycero-3-phosphocholine + H2O = sn-glycerol 3-phosphocholine + hexadecanoate + H(+). It carries out the reaction N-(acetyl)-sphing-4-enine + a 1,2-diacyl-sn-glycero-3-phosphoethanolamine = 1-O-acyl-N-(acetyl)-sphing-4-enine + a 2-acyl-sn-glycero-3-phosphoethanolamine. It catalyses the reaction 1-hexadecanoyl-2-(9Z-octadecenoyl)-sn-glycero-3-phosphoethanolamine + N-(acetyl)-sphing-4-enine = 2-(9Z-octadecenoyl)-sn-glycero-3-phosphoethanolamine + 1-hexadecanoyl-N-(acetyl)-sphing-4-enine. The catalysed reaction is 1-hexadecanoyl-2-(9Z,12Z-octadecadienoyl)-sn-glycero-3-phosphoethanolamine + N-(acetyl)-sphing-4-enine = 2-(9Z,12Z)-octadecadienoyl-sn-glycero-3-phosphoethanolamine + 1-hexadecanoyl-N-(acetyl)-sphing-4-enine. The enzyme catalyses 1-hexadecanoyl-2-(5Z,8Z,11Z,14Z-eicosatetraenoyl)-sn-glycero-3-phosphoethanolamine + N-(acetyl)-sphing-4-enine = 2-(5Z,8Z,11Z,14Z)-eicosatetraenoyl-sn-glycero-3-phosphoethanolamine + 1-hexadecanoyl-N-(acetyl)-sphing-4-enine. It carries out the reaction N-(acetyl)-sphing-4-enine + a 1,2-diacyl-sn-glycero-3-phosphoethanolamine = 1-O-acyl-N-(acetyl)-sphing-4-enine + a 1-acyl-sn-glycero-3-phosphoethanolamine. It catalyses the reaction 1-hexadecanoyl-2-(9Z-octadecenoyl)-sn-glycero-3-phosphoethanolamine + N-(acetyl)-sphing-4-enine = 1-(9Z-octadecenoyl)-N-(acetyl)-sphing-4-enine + 1-hexadecanoyl-sn-glycero-3-phosphoethanolamine. The catalysed reaction is 1-hexadecanoyl-2-(9Z,12Z-octadecadienoyl)-sn-glycero-3-phosphoethanolamine + N-(acetyl)-sphing-4-enine = 1-(9Z,12Z-octadecadienoyl)-N-acetylsphing-4-enine + 1-hexadecanoyl-sn-glycero-3-phosphoethanolamine. The enzyme catalyses 1-hexadecanoyl-2-(5Z,8Z,11Z,14Z-eicosatetraenoyl)-sn-glycero-3-phosphoethanolamine + N-(acetyl)-sphing-4-enine = 1-(5Z,8Z,11Z,14Z)-eicosatetraenoyl-N-(acetyl)-sphing-4-enine + 1-hexadecanoyl-sn-glycero-3-phosphoethanolamine. It carries out the reaction N-(acetyl)-sphing-4-enine + a 1,2-diacyl-sn-glycero-3-phosphocholine = 1-O-acyl-N-(acetyl)-sphing-4-enine + a 2-acyl-sn-glycero-3-phosphocholine. It catalyses the reaction 1-hexadecanoyl-2-(9Z-octadecenoyl)-sn-glycero-3-phosphocholine + N-(acetyl)-sphing-4-enine = 1-hexadecanoyl-N-(acetyl)-sphing-4-enine + 2-(9Z-octadecenoyl)-sn-glycero-3-phosphocholine. The catalysed reaction is 1-hexadecanoyl-2-(9Z,12Z-octadecadienoyl)-sn-glycero-3-phosphocholine + N-(acetyl)-sphing-4-enine = 2-(9Z,12Z-octadecadienoyl)-sn-glycero-3-phosphocholine + 1-hexadecanoyl-N-(acetyl)-sphing-4-enine. The enzyme catalyses 1-hexadecanoyl-2-(5Z,8Z,11Z,14Z-eicosatetraenoyl)-sn-glycero-3-phosphocholine + N-(acetyl)-sphing-4-enine = 1-hexadecanoyl-N-(acetyl)-sphing-4-enine + 2-(5Z,8Z,11Z,14Z)-eicosatetraenoyl-sn-glycero-3-phosphocholine. It carries out the reaction 1-hexadecanoyl-2-(4Z,7Z,10Z,13Z,16Z,19Z-docosahexaenoyl)-sn-glycero-3-phosphocholine + N-(acetyl)-sphing-4-enine = 2-(4Z,7Z,10Z,13Z,16Z,19Z-docosahexaenoyl)-sn-glycero-3-phosphocholine + 1-hexadecanoyl-N-(acetyl)-sphing-4-enine. It catalyses the reaction 1-hexadecanoyl-2-nonadioyl-sn-glycero-3-phosphocholine + N-(acetyl)-sphing-4-enine = 2-nonadioyl-sn-glycero-3-phosphocholine + 1-hexadecanoyl-N-(acetyl)-sphing-4-enine. The catalysed reaction is 1-octadecanoyl-2-(9Z-octadecenoyl)-sn-glycero-3-phosphocholine + N-(acetyl)-sphing-4-enine = 1-octadecanoyl-N-(acetyl)-sphing-4-enine + 2-(9Z-octadecenoyl)-sn-glycero-3-phosphocholine. The enzyme catalyses 1-(9Z)-octadecenoyl-2-octadecanoyl-sn-glycero-3-phosphocholine + N-(acetyl)-sphing-4-enine = 2-octadecanoyl-sn-glycero-3-phosphocholine + 1-(9Z-octadecenoyl)-N-(acetyl)-sphing-4-enine. It carries out the reaction 1-octadecanoyl-2-(5Z,8Z,11Z,14Z-eicosatetraenoyl)-sn-glycero-3-phosphocholine + N-(acetyl)-sphing-4-enine = 1-octadecanoyl-N-(acetyl)-sphing-4-enine + 2-(5Z,8Z,11Z,14Z)-eicosatetraenoyl-sn-glycero-3-phosphocholine. It catalyses the reaction 1-(9Z-octadecenoyl)-2-hexadecanoyl-sn-glycero-3-phosphocholine + N-(acetyl)-sphing-4-enine = 1-(9Z-octadecenoyl)-N-(acetyl)-sphing-4-enine + 2-hexadecanoyl-sn-glycero-3-phosphocholine. The catalysed reaction is N-(acetyl)-sphing-4-enine + a 1,2-diacyl-sn-glycero-3-phosphocholine = 1-O-acyl-N-(acetyl)-sphing-4-enine + a 1-acyl-sn-glycero-3-phosphocholine. The enzyme catalyses 1-hexadecanoyl-2-(9Z-octadecenoyl)-sn-glycero-3-phosphocholine + N-(acetyl)-sphing-4-enine = 1-(9Z-octadecenoyl)-N-(acetyl)-sphing-4-enine + 1-hexadecanoyl-sn-glycero-3-phosphocholine. It carries out the reaction 1-hexadecanoyl-2-(9Z,12Z-octadecadienoyl)-sn-glycero-3-phosphocholine + N-(acetyl)-sphing-4-enine = 1-(9Z,12Z-octadecadienoyl)-N-acetylsphing-4-enine + 1-hexadecanoyl-sn-glycero-3-phosphocholine. It catalyses the reaction 1-hexadecanoyl-2-(5Z,8Z,11Z,14Z-eicosatetraenoyl)-sn-glycero-3-phosphocholine + N-(acetyl)-sphing-4-enine = 1-(5Z,8Z,11Z,14Z)-eicosatetraenoyl-N-(acetyl)-sphing-4-enine + 1-hexadecanoyl-sn-glycero-3-phosphocholine. The catalysed reaction is 1-hexadecanoyl-2-(4Z,7Z,10Z,13Z,16Z,19Z-docosahexaenoyl)-sn-glycero-3-phosphocholine + N-(acetyl)-sphing-4-enine = 1-(4Z,7Z,10Z,13Z,16Z,19Z-docosahexaenoyl)-N-(acetyl)-sphing-4-enine + 1-hexadecanoyl-sn-glycero-3-phosphocholine. The enzyme catalyses 1-octadecanoyl-2-(9Z-octadecenoyl)-sn-glycero-3-phosphocholine + N-(acetyl)-sphing-4-enine = 1-(9Z-octadecenoyl)-N-(acetyl)-sphing-4-enine + 1-octadecanoyl-sn-glycero-3-phosphocholine. It carries out the reaction 1-octadecanoyl-2-(9Z,12Z)-octadecadienoyl-sn-glycero-3-phosphocholine + N-(acetyl)-sphing-4-enine = 1-(9Z,12Z-octadecadienoyl)-N-acetylsphing-4-enine + 1-octadecanoyl-sn-glycero-3-phosphocholine. It catalyses the reaction 1-(9Z-octadecenoyl)-2-hexadecanoyl-sn-glycero-3-phosphocholine + N-(acetyl)-sphing-4-enine = 1-hexadecanoyl-N-(acetyl)-sphing-4-enine + 1-(9Z-octadecenoyl)-sn-glycero-3-phosphocholine. The catalysed reaction is 1-(9Z)-octadecenoyl-2-octadecanoyl-sn-glycero-3-phosphocholine + N-(acetyl)-sphing-4-enine = 1-octadecanoyl-N-(acetyl)-sphing-4-enine + 1-(9Z-octadecenoyl)-sn-glycero-3-phosphocholine. The enzyme catalyses 1,2-di-(9Z-octadecenoyl)-sn-glycero-3-phosphocholine + N-(acetyl)-sphing-4-enine = 1-(9Z-octadecenoyl)-N-(acetyl)-sphing-4-enine + 1-(9Z-octadecenoyl)-sn-glycero-3-phosphocholine. It carries out the reaction 1-octadecanoyl-2-(5Z,8Z,11Z,14Z-eicosatetraenoyl)-sn-glycero-3-phosphocholine + N-(acetyl)-sphing-4-enine = 1-(5Z,8Z,11Z,14Z)-eicosatetraenoyl-N-(acetyl)-sphing-4-enine + 1-octadecanoyl-sn-glycero-3-phosphocholine. It catalyses the reaction a 1,2-diacyl-sn-glycero-3-phospho-L-serine + N-(acetyl)-sphing-4-enine = a 2-acyl-sn-glycero-3-phospho-L-serine + 1-O-acyl-N-(acetyl)-sphing-4-enine. The catalysed reaction is 1-octadecanoyl-2-(9Z-octadecenoyl)-sn-glycero-3-phospho-L-serine + N-(acetyl)-sphing-4-enine = 2-(9Z-octadecenoyl)-sn-glycero-3-phospho-L-serine + 1-octadecanoyl-N-(acetyl)-sphing-4-enine. The enzyme catalyses a 1,2-diacyl-sn-glycero-3-phospho-L-serine + N-(acetyl)-sphing-4-enine = 1-O-acyl-N-(acetyl)-sphing-4-enine + a 1-acyl-sn-glycero-3-phospho-L-serine. It carries out the reaction 1-octadecanoyl-2-(9Z-octadecenoyl)-sn-glycero-3-phospho-L-serine + N-(acetyl)-sphing-4-enine = 1-octadecanoyl-sn-glycero-3-phosphoserine + 1-(9Z-octadecenoyl)-N-(acetyl)-sphing-4-enine. It catalyses the reaction a 1,2-diacyl-sn-glycero-3-phospho-(1'-sn-glycerol) + N-(acetyl)-sphing-4-enine = 2-acyl-sn-glycero-3-phospho-(1'-sn-glycerol) + 1-O-acyl-N-(acetyl)-sphing-4-enine. The catalysed reaction is 1-octadecanoyl-2-(9Z-octadecenoyl)-sn-glycero-3-phospho-(1'-sn-glycerol) + N-(acetyl)-sphing-4-enine = 2-(9Z-octadecenoyl)-sn-glycero-3-phospho-(1'-sn-glycerol) + 1-octadecanoyl-N-(acetyl)-sphing-4-enine. The enzyme catalyses a 1,2-diacyl-sn-glycero-3-phospho-(1'-sn-glycerol) + N-(acetyl)-sphing-4-enine = 1-O-acyl-N-(acetyl)-sphing-4-enine + 1-acyl-sn-glycero-3-phospho-(1'-sn-glycerol). It carries out the reaction 1-octadecanoyl-2-(9Z-octadecenoyl)-sn-glycero-3-phospho-(1'-sn-glycerol) + N-(acetyl)-sphing-4-enine = 1-octadecanoyl-sn-glycero-3-phospho-(1'-sn-glycerol) + 1-(9Z-octadecenoyl)-N-(acetyl)-sphing-4-enine. It catalyses the reaction an N-acylethanolamine + a 1,2-diacyl-sn-glycero-3-phosphocholine = 2-(acylamino)ethyl fatty acid + a 2-acyl-sn-glycero-3-phosphocholine. The catalysed reaction is an N-acylethanolamine + a 1,2-diacyl-sn-glycero-3-phosphocholine = 2-(acylamino)ethyl fatty acid + a 1-acyl-sn-glycero-3-phosphocholine. The enzyme catalyses N-(5Z,8Z,11Z,14Z-eicosatetraenoyl)-ethanolamine + 1,2-di-(9Z-octadecenoyl)-sn-glycero-3-phosphocholine = 2-[(5Z,8Z,11Z,14Z)-eicosatetraenoylamino]ethyl (9Z)-octadecenoate + (9Z-octadecenoyl)-sn-glycero-3-phosphocholine. It carries out the reaction N-(9Z-octadecenoyl) ethanolamine + 1,2-di-(9Z-octadecenoyl)-sn-glycero-3-phosphocholine = 2-[(9Z)-octadecenoylamino]ethyl (9Z)-octadecenoate + (9Z-octadecenoyl)-sn-glycero-3-phosphocholine. It catalyses the reaction a 3-acyl-sn-glycerol + a 1,2-diacyl-sn-glycero-3-phosphocholine = a 1,3-diacylglycerol + a 1-acyl-sn-glycero-3-phosphocholine. The catalysed reaction is a 3-acyl-sn-glycerol + a 1,2-diacyl-sn-glycero-3-phosphocholine = a 1,3-diacylglycerol + a 2-acyl-sn-glycero-3-phosphocholine. The enzyme catalyses 3-(9Z-octadecenoyl)-sn-glycerol + 1,2-di-(9Z-octadecenoyl)-sn-glycero-3-phosphocholine = 1,3-di-(9Z-octadecenoyl)-glycerol + (9Z-octadecenoyl)-sn-glycero-3-phosphocholine. It carries out the reaction 3-hexadecanoyl-sn-glycerol + 1,2-di-(9Z-octadecenoyl)-sn-glycero-3-phosphocholine = 1-(9Z)-octadecenoyl-3-hexadecanoyl-sn-glycerol + (9Z-octadecenoyl)-sn-glycero-3-phosphocholine. It catalyses the reaction a 1-acyl-sn-glycerol + a 1,2-diacyl-sn-glycero-3-phosphocholine = a 1,3-diacylglycerol + a 2-acyl-sn-glycero-3-phosphocholine. The catalysed reaction is a 1-acyl-sn-glycerol + a 1,2-diacyl-sn-glycero-3-phosphocholine = a 1,3-diacylglycerol + a 1-acyl-sn-glycero-3-phosphocholine. The enzyme catalyses 1-(9Z-octadecenoyl)-sn-glycerol + 1,2-di-(9Z-octadecenoyl)-sn-glycero-3-phosphocholine = 1,3-di-(9Z-octadecenoyl)-glycerol + (9Z-octadecenoyl)-sn-glycero-3-phosphocholine. It carries out the reaction 1-hexadecanoyl-sn-glycerol + 1,2-di-(9Z-octadecenoyl)-sn-glycero-3-phosphocholine = 1-hexadecanoyl-3-(9Z)-octadecenoyl-sn-glycerol + (9Z-octadecenoyl)-sn-glycero-3-phosphocholine. It catalyses the reaction a 2-acylglycerol + a 1,2-diacyl-sn-glycero-3-phosphocholine = a 1,2-diacylglycerol + a 2-acyl-sn-glycero-3-phosphocholine. The catalysed reaction is a 2-acylglycerol + a 1,2-diacyl-sn-glycero-3-phosphocholine = a 1,2-diacylglycerol + a 1-acyl-sn-glycero-3-phosphocholine. The enzyme catalyses 2-hexadecanoylglycerol + 1,2-di-(9Z-octadecenoyl)-sn-glycero-3-phosphocholine = 1-(9Z)-octadecenoyl-2-hexadecanoylglycerol + (9Z-octadecenoyl)-sn-glycero-3-phosphocholine. It carries out the reaction 1-O-alkylglycerol + a 1,2-diacyl-sn-glycero-3-phosphocholine = 1-O-alkyl-3-acylglycerol + a 1-acyl-sn-glycero-3-phosphocholine. It catalyses the reaction 1-O-alkylglycerol + a 1,2-diacyl-sn-glycero-3-phosphocholine = 1-O-alkyl-3-acylglycerol + a 2-acyl-sn-glycero-3-phosphocholine. The catalysed reaction is 1-O-hexadecylglycerol + 1,2-di-(9Z-octadecenoyl)-sn-glycero-3-phosphocholine = 1-O-hexadecyl-3-(9Z)-octadecenoylglycerol + (9Z-octadecenoyl)-sn-glycero-3-phosphocholine. The enzyme catalyses 1-O-alkyl-2-acyl-sn-glycerol + a 1,2-diacyl-sn-glycero-3-phosphocholine = 1-O-alkyl-2,3-diacyl-sn-glycerol + a 2-acyl-sn-glycero-3-phosphocholine. It carries out the reaction 1-O-alkyl-2-acyl-sn-glycerol + a 1,2-diacyl-sn-glycero-3-phosphocholine = 1-O-alkyl-2,3-diacyl-sn-glycerol + a 1-acyl-sn-glycero-3-phosphocholine. It catalyses the reaction 1-O-hexadecyl-2-acetyl-sn-glycerol + 1,2-di-(9Z-octadecenoyl)-sn-glycero-3-phosphocholine = 1-O-hexadecyl-2-acetyl-3-(9Z)-octadecenoyl-sn-glycerol + (9Z-octadecenoyl)-sn-glycero-3-phosphocholine. The catalysed reaction is 1-O-hexadecyl-2-O-methyl-sn-glycerol + 1,2-di-(9Z-octadecenoyl)-sn-glycero-3-phosphocholine = 1-O-hexadecyl-2-O-methyl-3-(9Z)-octadecenoyl-sn-glycerol + (9Z-octadecenoyl)-sn-glycero-3-phosphocholine. The enzyme catalyses a 1,2-diacyl-sn-glycero-3-phosphoethanolamine + H2O = a 1-acyl-sn-glycero-3-phosphoethanolamine + a fatty acid + H(+). It carries out the reaction 1-acyl-2-(5Z,8Z,11Z,14Z)-eicosatetraenoyl-sn-glycero-3-phosphoethanolamine + H2O = a 1-acyl-sn-glycero-3-phosphoethanolamine + (5Z,8Z,11Z,14Z)-eicosatetraenoate + H(+). It catalyses the reaction a 1,2-diacyl-sn-glycero-3-phospho-(1'-sn-glycerol) + H2O = 1-acyl-sn-glycero-3-phospho-(1'-sn-glycerol) + a fatty acid + H(+). The catalysed reaction is 1-hexadecanoyl-2-(9Z-octadecenoyl)-sn-glycero-3-phospho-(1'-sn-glycerol) + H2O = 1-hexadecanoyl-sn-glycero-3-phospho-(1'-sn-glycerol) + (9Z)-octadecenoate + H(+). The enzyme catalyses a 1,2-diacyl-sn-glycero-3-phospho-(1'-sn-glycerol) + H2O = 2-acyl-sn-glycero-3-phospho-(1'-sn-glycerol) + a fatty acid + H(+). It carries out the reaction 1-hexadecanoyl-2-(9Z-octadecenoyl)-sn-glycero-3-phospho-(1'-sn-glycerol) + H2O = 2-(9Z-octadecenoyl)-sn-glycero-3-phospho-(1'-sn-glycerol) + hexadecanoate + H(+). Its activity is regulated as follows. Transacylase activity is inhibited by MJ33. Functionally, has dual calcium-independent phospholipase and O-acyltransferase activities with a potential role in glycerophospholipid homeostasis and remodeling of acyl groups of lipophilic alcohols present in acidic cellular compartments. Catalyzes hydrolysis of the ester bond of the fatty acyl group attached at sn-1 or sn-2 position of phospholipids (phospholipase A1 or A2 activity) and transfer it to the hydroxyl group at the first carbon of lipophilic alcohols (O-acyltransferase activity). Among preferred fatty acyl donors are phosphatidylcholines, phosphatidylethanolamines, phosphatidylglycerols and phosphatidylserines. Favors sn-2 over sn-1 deacylation of unsaturated fatty acyl groups of phosphatidylcholines, phosphatidylethanolamines, and phosphatidylglycerols. Among preferred fatty acyl acceptors are natural lipophilic alcohols including short-chain ceramide N-acetyl-sphingosine (C2 ceramide), alkylacylglycerols, monoacylglycerols, and acylethanolamides such as anandamide and oleoylethanolamide. Selectively hydrolyzes the sn-1 fatty acyl group of truncated oxidized phospholipids and may play a role in detoxification of reactive oxidized phospholipids during oxidative stress. Required for normal phospholipid degradation in alveolar macrophages with potential implications in the clearance of pulmonary surfactant, which is mainly composed of dipalmitoylphosphatidylcholine (1,2-dihexadecanoyl-sn-glycero-3-phosphocholine). Involved in the first step of bis(monoacylglycero)phosphate (BMP) de novo synthesis from phosphatidylglycerol (1,2-diacyl-sn-glycero-3-phospho-(1'-sn-glycerol), PG). BMP is an important player in cargo sorting and degradation, regulation of cellular cholesterol levels and intercellular communication. At neutral pH, hydrolyzes the sn-1 fatty acyl group of the lysophosphatidylcholines. This Rattus norvegicus (Rat) protein is Lysosomal phospholipase A and acyltransferase (Pla2g15).